The chain runs to 260 residues: tRNA pseudouridine synthase C (260 aa).

Aspartate 54 is an active-site residue.

This sequence belongs to the pseudouridine synthase RluA family.

It catalyses the reaction uridine(65) in tRNA = pseudouridine(65) in tRNA. In terms of biological role, responsible for synthesis of pseudouridine from uracil-65 in transfer RNAs. The protein is tRNA pseudouridine synthase C (truC) of Salmonella typhi.